Consider the following 493-residue polypeptide: MFS-type transporter efuF (493 aa).

11 helical membrane-spanning segments follow: residues 90–110 (ITLVLFYVTFCLLDVPANMLL), 117–137 (IMLPTLMMGWGSMTLIQCAVH), 147–167 (LLMGAFEAGFMAGVVYYLTTF), 179–199 (IFYGAATIAGAFSGLLAYGVF), 211–231 (FLMIIEGSATILLASFAYWHL), 279–299 (IALYAVIGISYGVASASVGNF), 316–336 (LYTVAPYCVGCVILLAQCTSS), 343–363 (STHLAGAMLLTFVGFILLITL), 370–390 (GPTYFACFLLAAGAFTPSCIF), 406–426 (AVTGFMVGASNSGGIISSLAF), and 435–455 (IPALIVTATFQGVGIVLVLGF).

The protein belongs to the major facilitator superfamily.

The protein localises to the membrane. In terms of biological role, MFS-type transporter; part of the gene cluster that mediates the biosynthesis of enfumafungin, a glycosylated fernene-type triterpenoid with potent antifungal activity, mediated by its interaction with beta-1,3-glucan synthase and the fungal cell wall. Might facilitate the transport of glucose units to the subcellular site of enfumafungin biosynthesis. This chain is MFS-type transporter efuF, found in Hormonema carpetanum.